Consider the following 347-residue polypeptide: NADH-ubiquinone oxidoreductase chain 2 (347 aa).

A run of 10 helical transmembrane segments spans residues 3–23 (PIVFSTILTTAIMGTVIVMMS), 25–45 (HWLMVWIGFEMNLLAIIPILM), 59–79 (YFLTQATASMLLMSAIIINLM), 111–131 (FHFWVPEVTQGISLMSGLILL), 149–169 (INLDMLMTSALLSILVGGWGG), 178–198 (IMAYSSIAHMGWMTAILTYNP), 201–221 (TMLNMLIYIMMTLTTFMLLML), 242–262 (SLILIIMLSLGGLPPLSGFIP), 274–294 (NSIILPTSMAIMALLNLYFYL), and 325–345 (LLPTLIIMSTLLLPLMPTMSI).

This sequence belongs to the complex I subunit 2 family. In terms of assembly, core subunit of respiratory chain NADH dehydrogenase (Complex I) which is composed of 45 different subunits. Interacts with TMEM242.

It localises to the mitochondrion inner membrane. It carries out the reaction a ubiquinone + NADH + 5 H(+)(in) = a ubiquinol + NAD(+) + 4 H(+)(out). In terms of biological role, core subunit of the mitochondrial membrane respiratory chain NADH dehydrogenase (Complex I) which catalyzes electron transfer from NADH through the respiratory chain, using ubiquinone as an electron acceptor. Essential for the catalytic activity and assembly of complex I. This Rhinoceros unicornis (Greater Indian rhinoceros) protein is NADH-ubiquinone oxidoreductase chain 2.